We begin with the raw amino-acid sequence, 35 residues long: Potassium channel toxin alpha-KTx 6.12 (35 aa).

Gln1 bears the Pyrrolidone carboxylic acid mark. 4 disulfides stabilise this stretch: Cys4-Cys24, Cys10-Cys29, Cys14-Cys31, and Cys19-Cys34. Lysine amide is present on Lys35.

This sequence belongs to the short scorpion toxin superfamily. Potassium channel inhibitor family. Alpha-KTx 06 subfamily. In terms of assembly, monomer. As to expression, expressed by the venom gland.

Its subcellular location is the secreted. In terms of biological role, high affinity blocker of Kv1.3/KCNA3 channels of human T cells. Blocks Kv1.2/KCNA2 with an order of magnitude smaller than for Kv1.3/KCNA3. The chain is Potassium channel toxin alpha-KTx 6.12 from Anuroctonus phaiodactylus (Mafia scorpion).